We begin with the raw amino-acid sequence, 255 residues long: 5-oxoprolinase subunit A (255 aa).

Belongs to the LamB/PxpA family. In terms of assembly, forms a complex composed of PxpA, PxpB and PxpC.

The catalysed reaction is 5-oxo-L-proline + ATP + 2 H2O = L-glutamate + ADP + phosphate + H(+). Catalyzes the cleavage of 5-oxoproline to form L-glutamate coupled to the hydrolysis of ATP to ADP and inorganic phosphate. In Pyrococcus furiosus (strain ATCC 43587 / DSM 3638 / JCM 8422 / Vc1), this protein is 5-oxoprolinase subunit A.